Here is a 235-residue protein sequence, read N- to C-terminus: Thiamine-phosphate synthase (235 aa).

Residues 50 to 54 and asparagine 91 each bind 4-amino-2-methyl-5-(diphosphooxymethyl)pyrimidine; that span reads QLRDK. The Mg(2+) site is built by aspartate 92 and aspartate 111. Serine 130 provides a ligand contact to 4-amino-2-methyl-5-(diphosphooxymethyl)pyrimidine. 160 to 162 provides a ligand contact to 2-[(2R,5Z)-2-carboxy-4-methylthiazol-5(2H)-ylidene]ethyl phosphate; it reads TPT. Lysine 163 contacts 4-amino-2-methyl-5-(diphosphooxymethyl)pyrimidine. Residue glycine 191 coordinates 2-[(2R,5Z)-2-carboxy-4-methylthiazol-5(2H)-ylidene]ethyl phosphate.

The protein belongs to the thiamine-phosphate synthase family. The cofactor is Mg(2+).

The enzyme catalyses 2-[(2R,5Z)-2-carboxy-4-methylthiazol-5(2H)-ylidene]ethyl phosphate + 4-amino-2-methyl-5-(diphosphooxymethyl)pyrimidine + 2 H(+) = thiamine phosphate + CO2 + diphosphate. It catalyses the reaction 2-(2-carboxy-4-methylthiazol-5-yl)ethyl phosphate + 4-amino-2-methyl-5-(diphosphooxymethyl)pyrimidine + 2 H(+) = thiamine phosphate + CO2 + diphosphate. It carries out the reaction 4-methyl-5-(2-phosphooxyethyl)-thiazole + 4-amino-2-methyl-5-(diphosphooxymethyl)pyrimidine + H(+) = thiamine phosphate + diphosphate. It participates in cofactor biosynthesis; thiamine diphosphate biosynthesis; thiamine phosphate from 4-amino-2-methyl-5-diphosphomethylpyrimidine and 4-methyl-5-(2-phosphoethyl)-thiazole: step 1/1. Condenses 4-methyl-5-(beta-hydroxyethyl)thiazole monophosphate (THZ-P) and 2-methyl-4-amino-5-hydroxymethyl pyrimidine pyrophosphate (HMP-PP) to form thiamine monophosphate (TMP). The protein is Thiamine-phosphate synthase of Mycobacterium leprae (strain TN).